Consider the following 190-residue polypeptide: Peptidoglycan recognition protein 1 (190 aa).

An N-terminal signal peptide occupies residues 1 to 21 (MSRRYTPLAWVLLALLGLGAA). Gln-22 is subject to Pyrrolidone carboxylic acid. Intrachain disulfides connect Cys-24-Cys-148, Cys-40-Cys-85, and Cys-61-Cys-67. Positions 46–174 (QPVRYVVVSH…RDVQQTLSPG (129 aa)) constitute an N-acetylmuramoyl-L-alanine amidase domain.

The protein belongs to the N-acetylmuramoyl-L-alanine amidase 2 family. As to quaternary structure, homodimer; disulfide-linked. Synthesized only in bone marrow. The mature protein is stored in the cytoplasmic granules of eosinophils and neutrophils but is absent from monocytes, lymphocytes, or platelets.

The protein localises to the secreted. The protein resides in the cytoplasmic granule. In terms of biological role, innate immunity protein that plays several important functions in antimicrobial and antitumor defense systems. Acts as a pattern receptor that binds to murein peptidoglycans (PGN) of Gram-positive bacteria and thus provides bactericidal activity. Forms an equimolar complex with heat shock protein HSPA1A and induces programmed cell death through apoptosis and necroptosis in tumor cell lines by activating the TNFR1 receptor on the target cell membrane. In addition, acts in complex with the Ca(2+)-binding protein S100A4 as a chemoattractant able to induce lymphocyte movement. Mechanistically, this complex acts as a ligand of the chemotactic receptors CCR5 and CXCR3 which are present on the cells of the immune system. Also promotes the activation of lymphocytes that become able to kill virus-infected cells as well as tumor cells by modulating the spectrum of their target-cell specificity. Induction of cytotoxicity on monocyte surface requires interaction with TREM1 receptor. This is Peptidoglycan recognition protein 1 (PGLYRP1) from Bos taurus (Bovine).